Reading from the N-terminus, the 413-residue chain is Phosphoglycerate kinase (413 aa).

Substrate contacts are provided by residues 24–26, Arg39, 62–65, Arg123, and Arg165; these read DFN and HLSR. ATP is bound by residues Lys216, Glu343, and 369–372; that span reads GGDS.

This sequence belongs to the phosphoglycerate kinase family. Monomer.

Its subcellular location is the cytoplasm. It carries out the reaction (2R)-3-phosphoglycerate + ATP = (2R)-3-phospho-glyceroyl phosphate + ADP. Its pathway is carbohydrate degradation; glycolysis; pyruvate from D-glyceraldehyde 3-phosphate: step 2/5. This chain is Phosphoglycerate kinase, found in Mycoplasmoides gallisepticum (strain R(low / passage 15 / clone 2)) (Mycoplasma gallisepticum).